Consider the following 337-residue polypeptide: MSLKIPGLADMHVHLRQDNMLKAVVPTVAEGGVSVAYVMPNLIPPITTVDACLQYKKEIEQLDSKTTYLMSLYLSPETTPEVIYEAAKKGIRGVKSYPKGATTNSESGVESYEPFYPTFAAMQETGMILNIHGEVPPSKDNTVFTAEPKFLPTLLDLHQRFPKLKIVLEHCTTADAVEAVKACGESVAGTITAHHLYLTQKDWQDDPYCFCKPVAKTERDRRALIEAATSKNPKFFFGSDSAPHPRSSKLKTPPAAGVFTQPFAASYLAEVFDKEGRLDALKDFACIFGRKFYCIPLDFKESNIVLKKESFRVPESVANDLVPFHPNEVLQWHCSWE.

Residues histidine 12, histidine 14, lysine 95, histidine 132, histidine 170, and aspartate 240 each contribute to the Zn(2+) site. Residue lysine 95 is modified to N6-carboxylysine.

The protein belongs to the metallo-dependent hydrolases superfamily. DHOase family. Class II DHOase subfamily. Zn(2+) is required as a cofactor.

The enzyme catalyses (S)-dihydroorotate + H2O = N-carbamoyl-L-aspartate + H(+). It participates in pyrimidine metabolism; UMP biosynthesis via de novo pathway; (S)-dihydroorotate from bicarbonate: step 3/3. The polypeptide is Probable dihydroorotase (ura2) (Schizosaccharomyces pombe (strain 972 / ATCC 24843) (Fission yeast)).